Consider the following 330-residue polypeptide: MASPPAPPAKKRKMNFSEREVEIIVEELERGKHLLINHFNAGVPLAAKAAAWHDILRRVNAVATCHRELPEVKKKWSDLKTEVRRKVAQVRAAMEGGGESQNGGGAGTEGEDPTGATAAPVILTPMQQRICNLLGEATIISLPSGDCGAGRRDRDPHHRLRHHRHADPGVSAAPSEVPAETTYHSLEDGVVEYCTTEAPTTVTAEAPLEMMAHQHEVSAKPQELKSRIALNSAKLLQEQRVTNLHVKEIAQHLEQQNDLLQMIRRSQEVQACAQERQAQAMEGTQAALSALIQVLRPMIKDFRRFLQSNTPSPSVTADPNQTGQQDGIIQ.

A required for nuclear localization and apoptosis-inducing activity region spans residues 1–74; the sequence is MASPPAPPAK…CHRELPEVKK (74 aa). Disordered stretches follow at residues 92-117, 147-175, and 309-330; these read AAME…TGAT, CGAG…AAPS, and NTPS…GIIQ. Over residues 95-108 the composition is skewed to gly residues; sequence EGGGESQNGGGAGT.

It belongs to the NAIF1 family.

It localises to the nucleus. In terms of biological role, induces apoptosis. The sequence is that of Nuclear apoptosis-inducing factor 1 (NAIF1) from Gallus gallus (Chicken).